The primary structure comprises 66 residues: UPF0434 protein Jann_0424 (66 aa).

This sequence belongs to the UPF0434 family.

This is UPF0434 protein Jann_0424 from Jannaschia sp. (strain CCS1).